The following is an 884-amino-acid chain: Protein translocase subunit SecA (884 aa).

ATP is bound by residues Gln-88, 106–110, and Asp-509; that span reads GEGKT. The disordered stretch occupies residues 822-884; it reads EQKKLKMSGA…PKKGLFANND (63 aa). Basic and acidic residues predominate over residues 833–842; that stretch reads KGGEDLEETK. Zn(2+) is bound by residues Cys-858, Cys-860, Cys-869, and His-870.

This sequence belongs to the SecA family. As to quaternary structure, monomer and homodimer. Part of the essential Sec protein translocation apparatus which comprises SecA, SecYEG and auxiliary proteins SecDF-YajC and YidC. Zn(2+) is required as a cofactor.

The protein resides in the cell inner membrane. Its subcellular location is the cytoplasm. It catalyses the reaction ATP + H2O + cellular proteinSide 1 = ADP + phosphate + cellular proteinSide 2.. In terms of biological role, part of the Sec protein translocase complex. Interacts with the SecYEG preprotein conducting channel. Has a central role in coupling the hydrolysis of ATP to the transfer of proteins into and across the cell membrane, serving as an ATP-driven molecular motor driving the stepwise translocation of polypeptide chains across the membrane. The polypeptide is Protein translocase subunit SecA (Campylobacter hominis (strain ATCC BAA-381 / DSM 21671 / CCUG 45161 / LMG 19568 / NCTC 13146 / CH001A)).